A 698-amino-acid polypeptide reads, in one-letter code: MNPLRSIQHNITTPPISGGQPLDAVGPQAQQSHPKRISPSQLSQSAHQALERLSANAEHQRLASLVRNALQDGTFQFQSSNHTQVTYKASICLPADTDTVRTDHLINNELTVQARLNDQSEYDIVSAHLHGSSKAISFDVPSPPPAHGSASSVLSERTHLGMSRVLSQDAVDSSSPLLSSPDHSRPPSQHIGSVRRDSDSLVSDNPVVQALLSFAQADQQFPTQAASIAGVQLEMRPRRDIEKALEEFKGAFTVEKAQLMSGANSSERVDEDVNADIHIPLLLKAIERGAAAFGPNALIGQNSAKAFLASCAPKITSNDDVLSEFINRKLKGDDDLQVRLGAQELLHVATKKEFQLGGLAGSIGVSSILGSAWELGASELLKNAIFGKNFSPSQYALQLAGIDSVPPLMIESMDTMCVLAIIKGMKGEEWSMSDLLPKALKAGAISSVVSFPNNVLQYAGFKSKVGDLAANSMTTEAAIFGAASGIPPEVKESEELMRAGLFQSMKDGVMAHPGEGADTKKTIERMTRHALDIAPGESTAVKSMGLASIVGMIPLIASNKATGLLSEQVLRIFRSTVFNPIEAIALNALALGGRVNVPGLFDSDNAKHARVVQTILARASQHMEAGDRDISAEELHQMLAPRSEFLRHVGSAIVNGMNASFEAIPALVRKLGYGEAPLAERIPYQDLAVPDTSRQPAP.

Residues 1–15 are compositionally biased toward polar residues; it reads MNPLRSIQHNITTPP. Disordered stretches follow at residues 1-36 and 171-200; these read MNPL…HPKR and VDSS…DSDS. A compositionally biased stretch (low complexity) spans 172–181; it reads DSSSPLLSSP.

The protein localises to the secreted. Its function is as follows. Effector protein involved in non-host recognition. This chain is Effector protein AvrPphDPgy (avrPphDPgy), found in Pseudomonas savastanoi pv. glycinea (Pseudomonas syringae pv. glycinea).